An 809-amino-acid polypeptide reads, in one-letter code: H(+)/Cl(-) exchange transporter 7 (809 aa).

Topologically, residues 1-130 (MANVSKKVSW…TAFRTVEIKR (130 aa)) are cytoplasmic. 2 positions are modified to phosphoserine: S9 and S64. The next 2 membrane-spanning stretches (helical) occupy residues 131–163 (WVICAMVGILTGLVACFIDIVVEKLAGLKYRLV) and 178–201 (FSLLLWAALNAAFVLLGSTIVAFI). A Selectivity filter part_1 motif is present at residues 207–211 (GSGIP). Chloride is bound at residue S208. The helical intramembrane region spans 210–217 (IPQIKCFL). 2 helical membrane passes run 227-245 (RLKTLVIKVSGVILSVVGG) and 251-268 (EGPMIHSGSVIAAGISQG). A Selectivity filter part_2 motif is present at residues 249 to 253 (GKEGP). Intramembrane regions (helical) lie at residues 292–304 (FVSAGAAAGVSAA) and 308–316 (PVGGVLFSL). The next 5 helical transmembrane spans lie at 326–345 (FLTWRIFFASMISTFTLNFV), 379–409 (IPIFIAMGVVGGILGAVFNALNYWLTMFRIR), 414–436 (PCLQVVEATLVAAVTATAAFVLI), 491–511 (PMTLGLFTLVYFFLACWTYGL), and 516–539 (GVFIPSLLIGAAWGRLFGISLSYI). The Selectivity filter part_3 motif lies at 516 to 520 (GVFIP). F518 provides a ligand contact to chloride. Positions 549-563 (GKYALMGAAAQLGGI) form an intramembrane region, helical. The note=Loop between two helices intramembrane region spans 564–566 (VRM). The helical intramembrane region spans 567–578 (TLSLTVIMMEAT). The segment at residues 579–582 (SSVT) is an intramembrane region (note=Loop between two helices). The chain crosses the membrane as a helical span at residues 583 to 601 (YGFPIMLVLMTAKIVGDVF). Over 602-809 (IEGLYDMHIQ…GLEELSLAQT (208 aa)) the chain is Cytoplasmic. Y606 serves as a coordination point for chloride. 2 CBS domains span residues 635–699 (MSTP…VFVE) and 745–803 (MNPS…GLEE). ATP contacts are provided by residues 662–664 (HNG) and 787–790 (TRKD). Residue S805 is modified to Phosphoserine.

Belongs to the chloride channel (TC 2.A.49) family. ClC-7/CLCN7 subfamily. Chloride channel 7 are heteromers of alpha (CLCN7) and beta (OSTM1) subunits.

The protein resides in the lysosome membrane. It catalyses the reaction 2 chloride(in) + H(+)(out) = 2 chloride(out) + H(+)(in). Functionally, slowly voltage-gated channel mediating the exchange of chloride ions against protons. Functions as antiporter and contributes to the acidification of the lysosome lumen and may be involved in maintaining lysosomal pH. The CLC channel family contains both chloride channels and proton-coupled anion transporters that exchange chloride or another anion for protons. The presence of conserved gating glutamate residues is typical for family members that function as antiporters. The chain is H(+)/Cl(-) exchange transporter 7 (CLCN7) from Bos taurus (Bovine).